Consider the following 194-residue polypeptide: Ribonuclease HII (194 aa).

Positions 3–193 constitute an RNase H type-2 domain; it reads ILTAGVDEAG…VRNLLAQQTL (191 aa). Residues D9, E10, and D101 each contribute to the a divalent metal cation site.

This sequence belongs to the RNase HII family. Requires Mn(2+) as cofactor. The cofactor is Mg(2+).

Its subcellular location is the cytoplasm. The enzyme catalyses Endonucleolytic cleavage to 5'-phosphomonoester.. Endonuclease that specifically degrades the RNA of RNA-DNA hybrids. In Neisseria meningitidis serogroup C (strain 053442), this protein is Ribonuclease HII.